A 112-amino-acid polypeptide reads, in one-letter code: MCKDSQKPSVPSHGPKTPSCKGVKAPHSSRPRAWKQDLEQSLAAAYVPVVVDSKGQNPDKLRFNFYTSQYSNSLNPFYTLQKPTCGYLYRRDTDHTRKRFDVPPANLVLWRS.

A disordered region spans residues 1-34 (MCKDSQKPSVPSHGPKTPSCKGVKAPHSSRPRAW).

Belongs to the CIMIP3-like family.

The protein resides in the cytoplasm. Its subcellular location is the cytoskeleton. It is found in the flagellum axoneme. This is Ciliary microtubule inner protein 3 from Homo sapiens (Human).